The sequence spans 716 residues: Leucine-rich repeat neuronal protein 1 (716 aa).

The N-terminal stretch at 1 to 25 is a signal peptide; it reads MARMSFVIAACQLVLGLLMTSLTES. Positions 26–72 constitute an LRRNT domain; the sequence is SIQNSECPQLCVCEIRPWFTPQSTYREATTVDCNDLRLTRIPSNLSS. Over 26 to 631 the chain is Extracellular; it reads SIQNSECPQL…DISDQETSTA (606 aa). LRR repeat units lie at residues 73 to 95, 96 to 117, 120 to 141, 144 to 165, 168 to 189, 192 to 213, 216 to 237, 240 to 261, 264 to 285, 313 to 335, and 338 to 359; these read DTQVLLLQSNNIAKTVDELQQLF, NLTELDFSQNNFTNIKEVGLAN, QLTTLHLEENQITEMTDYCLQD, NLQELYINHNQISTISAHAFAG, NLLRLHLNSNKLKVIDSRWFDS, NLEILMIGENPVIGILDMNFKP, NLRSLVLAGMYLTDIPGNALVG, SLESLSFYDNKLVKVPQLALQK, NLKFLDLNKNPIHKIQEGDFKN, ELTKLEATNNPKLSYIHRLAFRS, and ALESLMLNNNALNAIYQKTVES. N-linked (GlcNAc...) asparagine glycosylation is found at asparagine 96 and asparagine 117. The 54-residue stretch at 371–424 folds into the LRRCT domain; it reads NPLRCDCVIHWINSNKTNIRFMEPLSMFCAMPPEYKGHQVKEVLIQDSSEQCLP. A glycan (N-linked (GlcNAc...) asparagine) is linked at asparagine 385. Positions 424 to 515 constitute an Ig-like C2-type domain; that stretch reads PMISHDSFPN…GADTRVATIK (92 aa). The cysteines at positions 447 and 499 are disulfide-linked. N-linked (GlcNAc...) asparagine glycosylation occurs at asparagine 517. The Fibronectin type-III domain occupies 525–617; sequence QVLKIYVKQT…SCVNVTTKNA (93 aa). The helical transmembrane segment at 632 to 652 threads the bilayer; it reads LAAVMGSMFAVISLASIAVYF. Topologically, residues 653-716 are cytoplasmic; it reads AKRFKRKNYH…VDTSRSYYMW (64 aa). The segment covering 691–700 has biased composition (basic and acidic residues); the sequence is DSEKDKDGSA. Residues 691 to 716 are disordered; it reads DSEKDKDGSADTKPTQVDTSRSYYMW. Polar residues predominate over residues 702–716; that stretch reads TKPTQVDTSRSYYMW.

The protein localises to the membrane. This Homo sapiens (Human) protein is Leucine-rich repeat neuronal protein 1 (LRRN1).